A 191-amino-acid polypeptide reads, in one-letter code: Elongation factor P (191 aa).

This sequence belongs to the elongation factor P family.

The protein resides in the cytoplasm. Its pathway is protein biosynthesis; polypeptide chain elongation. In terms of biological role, involved in peptide bond synthesis. Stimulates efficient translation and peptide-bond synthesis on native or reconstituted 70S ribosomes in vitro. Probably functions indirectly by altering the affinity of the ribosome for aminoacyl-tRNA, thus increasing their reactivity as acceptors for peptidyl transferase. This Bartonella tribocorum (strain CIP 105476 / IBS 506) protein is Elongation factor P.